Here is a 369-residue protein sequence, read N- to C-terminus: Tsukushi (369 aa).

The signal sequence occupies residues 1–19 (MQFLAWFNMLLLLPCFSTT). The 41-residue stretch at 20 to 60 (KTCFPGCHCEVESFGLFDSFSLTKVDCSGIGSHIVPVPIPL) folds into the LRRNT domain. LRR repeat units lie at residues 61–81 (DTSYLDLSSNKLETINESMLT), 87–108 (TLVSLDLSYNNIAKISSTTFSR), 111–132 (YLESLDLSHNSLEVLPEDCFSS), 134–155 (PLGDIDLSNNKLLDIALDVFAS), 161–181 (PLNVDLSNNMLSKITRNHEKS), 184–205 (NIQNLNLSGNRLTSVPNLQGIP), 206–226 (LRYLNLDGNPLAKIEKGDFKG), 229–248 (GLIHLSLSGLHDFRELSPYS), 254–276 (ALQVLDLSNNPNLRSLTAEVIFG), 279–300 (SIQELNLSGTGVSSLPKTVLKY), and 303–323 (SLKSITLRKNIQCFKTIKEGQ). N76 carries an N-linked (GlcNAc...) asparagine glycan. N189 carries N-linked (GlcNAc...) asparagine glycosylation. The N-linked (GlcNAc...) asparagine glycan is linked to N284.

As to quaternary structure, forms a ternary complex with chordin/CHRD and BMP4. Interacts with FZD4 (via FZ domain); competes with WNT2B for binding to FZD4, inhibiting Wnt signaling and repressing peripheral eye development. Interacts with BMP4; shows stronger interaction with BMP4 than isoform 2. Interacts with DVR1/VG1; the interaction is inhibited by BMP4. Interacts with BMP7. In terms of assembly, interacts with FZD4 (via FZ domain); competes with WNT2B for binding to FZD4, inhibiting Wnt signaling and repressing peripheral eye development. Interacts with BMP4; shows weaker interaction with BMP4 than isoform 1. Interacts with DVR1/VG1; the interaction is inhibited by BMP4. Interacts with BMP7. Post-translationally, N-glycosylated. In terms of tissue distribution, during embryonic development, expressed in the middle primitive streak and Hensen's node. Expressed in the peripheral region of the developing eye. Expressed in the presomitic mesoderm during somitogenesis in a NOTCH-dependent manner.

Its subcellular location is the secreted. In terms of biological role, contributes to various developmental events through its interactions with multiple signaling pathways. Dorsalizing factor involved in the induction of Hensen's node by inhibiting bone morphogenetic proteins during gastrulation and by enhancing DVR1/VG1 activity. Wnt signaling inhibitor which competes with WNT2B for binding to Wnt receptor FZD4 and represses WNT2B-dependent development of the peripheral eye. Shows strong bone morphogenetic protein antagonistic activity. Functionally, shows weak bone morphogenetic protein antagonistic activity. The sequence is that of Tsukushi (TSKU) from Gallus gallus (Chicken).